Here is a 194-residue protein sequence, read N- to C-terminus: ATP-dependent Clp protease proteolytic subunit (194 aa).

Catalysis depends on Ser97, which acts as the Nucleophile. His122 is an active-site residue.

It belongs to the peptidase S14 family. As to quaternary structure, fourteen ClpP subunits assemble into 2 heptameric rings which stack back to back to give a disk-like structure with a central cavity, resembling the structure of eukaryotic proteasomes.

The protein localises to the cytoplasm. The enzyme catalyses Hydrolysis of proteins to small peptides in the presence of ATP and magnesium. alpha-casein is the usual test substrate. In the absence of ATP, only oligopeptides shorter than five residues are hydrolyzed (such as succinyl-Leu-Tyr-|-NHMec, and Leu-Tyr-Leu-|-Tyr-Trp, in which cleavage of the -Tyr-|-Leu- and -Tyr-|-Trp bonds also occurs).. In terms of biological role, cleaves peptides in various proteins in a process that requires ATP hydrolysis. Has a chymotrypsin-like activity. Plays a major role in the degradation of misfolded proteins. In Carsonella ruddii (strain PV), this protein is ATP-dependent Clp protease proteolytic subunit.